The following is a 444-amino-acid chain: Probable glycine dehydrogenase (decarboxylating) subunit 1 (444 aa).

This sequence belongs to the GcvP family. N-terminal subunit subfamily. In terms of assembly, the glycine cleavage system is composed of four proteins: P, T, L and H. In this organism, the P 'protein' is a heterodimer of two subunits.

It carries out the reaction N(6)-[(R)-lipoyl]-L-lysyl-[glycine-cleavage complex H protein] + glycine + H(+) = N(6)-[(R)-S(8)-aminomethyldihydrolipoyl]-L-lysyl-[glycine-cleavage complex H protein] + CO2. In terms of biological role, the glycine cleavage system catalyzes the degradation of glycine. The P protein binds the alpha-amino group of glycine through its pyridoxal phosphate cofactor; CO(2) is released and the remaining methylamine moiety is then transferred to the lipoamide cofactor of the H protein. In Chlorobium luteolum (strain DSM 273 / BCRC 81028 / 2530) (Pelodictyon luteolum), this protein is Probable glycine dehydrogenase (decarboxylating) subunit 1.